Reading from the N-terminus, the 1738-residue chain is Interaptin (1738 aa).

Residues 1–248 (MEHSTPLNEE…TYISLFPKVY (248 aa)) form an actin-binding region. Topologically, residues 1–1705 (MEHSTPLNEE…RIFPSKNTRP (1705 aa)) are cytoplasmic. 2 consecutive Calponin-homology (CH) domains span residues 22–128 (IAQK…LRYQ) and 146–249 (TKPS…KVYQ). 3 disordered regions span residues 285-350 (SKST…SNLS), 1068-1090 (IQQLQSQLNEQRQQQSNQLSEKD), and 1589-1627 (LQQQKQQQQQPPTASSSPSSSPSLLSSTPTPKPQRPNQI). Residues 292–301 (QQNQQQQQQN) are compositionally biased toward low complexity. Over residues 302–316 (LLSPNSYRNSISFSK) the composition is skewed to polar residues. Composition is skewed to low complexity over residues 317–344 (SPSFEGSQSTGSSRSISPISSPIKNSTT), 1068–1086 (IQQLQSQLNEQRQQQSNQL), and 1589–1617 (LQQQKQQQQQPPTASSSPSSSPSLLSSTP). The stretch at 373–1598 (EESRVIEKIV…LQQQKQQQQQ (1226 aa)) forms a coiled coil. A helical; Anchor for type IV membrane protein transmembrane segment spans residues 1706 to 1726 (IFDWRALFFIGAAVLAISTLF).

Belongs to the alpha-actinin family.

The protein localises to the nucleus membrane. It localises to the endoplasmic reticulum membrane. The protein resides in the golgi apparatus. Its subcellular location is the golgi stack membrane. It is found in the cytoplasm. The protein localises to the cytoskeleton. It localises to the microtubule organizing center. The protein resides in the centrosome. Functionally, may function as linker between cellular membranes and the actin cytoskeleton. Required for normal development of fruiting bodies. The polypeptide is Interaptin (abpD) (Dictyostelium discoideum (Social amoeba)).